Here is a 737-residue protein sequence, read N- to C-terminus: 1,4-alpha-glucan branching enzyme GlgB (737 aa).

The active-site Nucleophile is aspartate 419. The Proton donor role is filled by glutamate 472.

The protein belongs to the glycosyl hydrolase 13 family. GlgB subfamily. Monomer.

The catalysed reaction is Transfers a segment of a (1-&gt;4)-alpha-D-glucan chain to a primary hydroxy group in a similar glucan chain.. It participates in glycan biosynthesis; glycogen biosynthesis. In terms of biological role, catalyzes the formation of the alpha-1,6-glucosidic linkages in glycogen by scission of a 1,4-alpha-linked oligosaccharide from growing alpha-1,4-glucan chains and the subsequent attachment of the oligosaccharide to the alpha-1,6 position. This Mesorhizobium japonicum (strain LMG 29417 / CECT 9101 / MAFF 303099) (Mesorhizobium loti (strain MAFF 303099)) protein is 1,4-alpha-glucan branching enzyme GlgB.